Reading from the N-terminus, the 305-residue chain is Phosphatidate cytidylyltransferase (305 aa).

8 helical membrane-spanning segments follow: residues 27-47, 67-87, 96-116, 124-144, 150-170, 202-222, 232-252, and 277-297; these read FLVI…VGLL, FPFS…ALTC, FPEH…IRLV, LGPI…SVPI, ILYG…AIFL, TVVG…LFYS, IAVP…GFFG, and MLDV…ILLI.

This sequence belongs to the CDS family.

The protein resides in the cell membrane. It catalyses the reaction a 1,2-diacyl-sn-glycero-3-phosphate + CTP + H(+) = a CDP-1,2-diacyl-sn-glycerol + diphosphate. Its pathway is phospholipid metabolism; CDP-diacylglycerol biosynthesis; CDP-diacylglycerol from sn-glycerol 3-phosphate: step 3/3. In Chlamydia trachomatis serovar D (strain ATCC VR-885 / DSM 19411 / UW-3/Cx), this protein is Phosphatidate cytidylyltransferase (cdsA).